We begin with the raw amino-acid sequence, 186 residues long: UPF0303 protein ZMO1353 (186 aa).

The protein belongs to the UPF0303 family.

The protein is UPF0303 protein ZMO1353 of Zymomonas mobilis subsp. mobilis (strain ATCC 31821 / ZM4 / CP4).